A 177-amino-acid chain; its full sequence is MVKKHKFYTKEDLLCSSRGELFGKYGPQLPAPNMLMIDRLVKVTENGGNYNKGFIKAELDINPNMWFFSCHFIGDPVMPGCLGLDAMWQLVGFYLGWLGGKGKGRALGVREVKFSGQILPTSKIVVYYIHFRRIINRKLFMGMADGEVFCDGKIIYTANDLKVGLFQDITSFKKDFK.

Histidine 71 is an active-site residue.

It belongs to the thioester dehydratase family. FabA subfamily. In terms of assembly, homodimer.

Its subcellular location is the cytoplasm. The catalysed reaction is a (3R)-hydroxyacyl-[ACP] = a (2E)-enoyl-[ACP] + H2O. The enzyme catalyses (3R)-hydroxydecanoyl-[ACP] = (2E)-decenoyl-[ACP] + H2O. It carries out the reaction (2E)-decenoyl-[ACP] = (3Z)-decenoyl-[ACP]. The protein operates within lipid metabolism; fatty acid biosynthesis. Necessary for the introduction of cis unsaturation into fatty acids. Catalyzes the dehydration of (3R)-3-hydroxydecanoyl-ACP to E-(2)-decenoyl-ACP and then its isomerization to Z-(3)-decenoyl-ACP. Can catalyze the dehydratase reaction for beta-hydroxyacyl-ACPs with saturated chain lengths up to 16:0, being most active on intermediate chain length. The sequence is that of 3-hydroxydecanoyl-[acyl-carrier-protein] dehydratase from Wigglesworthia glossinidia brevipalpis.